Reading from the N-terminus, the 384-residue chain is Formate-dependent phosphoribosylglycinamide formyltransferase (384 aa).

N(1)-(5-phospho-beta-D-ribosyl)glycinamide is bound by residues 14-15 (EL) and Glu-74. ATP-binding positions include Arg-106, Lys-147, 152–157 (SSGKGQ), 187–190 (EEFI), and Glu-195. Residues 111–300 (RLAAETLHLP…EFALHVRAVL (190 aa)) form the ATP-grasp domain. Glu-259 and Glu-271 together coordinate Mg(2+). N(1)-(5-phospho-beta-D-ribosyl)glycinamide-binding positions include Asp-278, Lys-348, and 355–356 (RR).

The protein belongs to the PurK/PurT family. In terms of assembly, homodimer.

The enzyme catalyses N(1)-(5-phospho-beta-D-ribosyl)glycinamide + formate + ATP = N(2)-formyl-N(1)-(5-phospho-beta-D-ribosyl)glycinamide + ADP + phosphate + H(+). It participates in purine metabolism; IMP biosynthesis via de novo pathway; N(2)-formyl-N(1)-(5-phospho-D-ribosyl)glycinamide from N(1)-(5-phospho-D-ribosyl)glycinamide (formate route): step 1/1. Involved in the de novo purine biosynthesis. Catalyzes the transfer of formate to 5-phospho-ribosyl-glycinamide (GAR), producing 5-phospho-ribosyl-N-formylglycinamide (FGAR). Formate is provided by PurU via hydrolysis of 10-formyl-tetrahydrofolate. In Bacillus velezensis (strain DSM 23117 / BGSC 10A6 / LMG 26770 / FZB42) (Bacillus amyloliquefaciens subsp. plantarum), this protein is Formate-dependent phosphoribosylglycinamide formyltransferase.